A 68-amino-acid polypeptide reads, in one-letter code: Large ribosomal subunit protein uL29 (68 aa).

The segment at 32–68 is disordered; sequence QDQLKRRTGSLDNPAERTQHRRDLARVLTVLTQKTKA. A compositionally biased stretch (basic and acidic residues) spans 45–56; that stretch reads PAERTQHRRDLA.

It belongs to the universal ribosomal protein uL29 family.

The polypeptide is Large ribosomal subunit protein uL29 (Myxococcus xanthus (strain DK1622)).